Consider the following 155-residue polypeptide: Large ribosomal subunit protein bL9c (155 aa).

This sequence belongs to the bacterial ribosomal protein bL9 family.

It is found in the plastid. It localises to the chloroplast. Its function is as follows. Binds to the 23S rRNA. The sequence is that of Large ribosomal subunit protein bL9c from Pyropia yezoensis (Susabi-nori).